Reading from the N-terminus, the 636-residue chain is tRNA uridine 5-carboxymethylaminomethyl modification enzyme MnmG (636 aa).

18 to 23 provides a ligand contact to FAD; that stretch reads GAGHAG. 281–295 is an NAD(+) binding site; that stretch reads GPRYCPSIEDKIVRF.

Belongs to the MnmG family. Homodimer. Heterotetramer of two MnmE and two MnmG subunits. The cofactor is FAD.

The protein localises to the cytoplasm. In terms of biological role, NAD-binding protein involved in the addition of a carboxymethylaminomethyl (cmnm) group at the wobble position (U34) of certain tRNAs, forming tRNA-cmnm(5)s(2)U34. The chain is tRNA uridine 5-carboxymethylaminomethyl modification enzyme MnmG from Lactiplantibacillus plantarum (strain ATCC BAA-793 / NCIMB 8826 / WCFS1) (Lactobacillus plantarum).